A 230-amino-acid polypeptide reads, in one-letter code: Flagellar L-ring protein (230 aa).

The first 15 residues, 1–15 (MSRLPSLSSLCLAIA), serve as a signal peptide directing secretion. Residue Cys16 is the site of N-palmitoyl cysteine attachment. Cys16 carries S-diacylglycerol cysteine lipidation.

Belongs to the FlgH family. In terms of assembly, the basal body constitutes a major portion of the flagellar organelle and consists of four rings (L,P,S, and M) mounted on a central rod.

It localises to the cell outer membrane. The protein resides in the bacterial flagellum basal body. Its function is as follows. Assembles around the rod to form the L-ring and probably protects the motor/basal body from shearing forces during rotation. The protein is Flagellar L-ring protein of Xanthomonas campestris pv. campestris (strain 8004).